A 473-amino-acid polypeptide reads, in one-letter code: Notchless protein homolog (473 aa).

The ubiquitin-like (UBL) domain stretch occupies residues 9–91 (GKTVMCLLTD…VLTIVYQQQA (83 aa)). WD repeat units lie at residues 107 to 146 (GHAE…PLFT), 149 to 188 (GHKN…LEGS), 192 to 236 (GHKK…SIIC), 239 to 277 (GHTL…LIRE), 313 to 354 (EKQK…QPKK), 358 to 399 (GHQQ…TVFR), 400 to 439 (GHVG…LKQD), and 442 to 473 (GHAD…LWKG). The DWD box signature appears at 417–432 (LLSGSKDSTLKIWEIR).

Belongs to the NLE1/RSA4 family. Associates with the pre-60S ribosomal particle. As to expression, constitutively and ubiquitously expressed.

It is found in the nucleus. The protein resides in the nucleolus. Its function is as follows. Required for female gametophyte development. The protein is Notchless protein homolog of Arabidopsis thaliana (Mouse-ear cress).